Here is a 165-residue protein sequence, read N- to C-terminus: Pro-MCH (165 aa).

Positions 1–21 (MAKMSLSSYMLMLAFSLFSHG) are cleaved as a signal peptide. Over residues 69-82 (DESGFMKDDDDKTT) the composition is skewed to basic and acidic residues. Positions 69 to 89 (DESGFMKDDDDKTTKNTGSKQ) are disordered. I143 is modified (isoleucine amide). C153 and C162 are joined by a disulfide.

This sequence belongs to the melanin-concentrating hormone family. Post-translationally, pro-MCH is processed differentially in the brain and in peripheral organs producing two neuropeptides; NEI and MCH. A third peptide, NGE, may also be produced. Preferential processing in neurons by prohormone convertase 2 (PC2) generates NEI. MCH is generated in neurons of the lateral hypothalmic area by several prohormone convertases including PC1/3, PC2 and PC5/6. MCH is present in all regions of the brain and in neurointermediate lobe of the pituarity gland, with highest concentrations in the hypothalamus. Also expressed to a much lesser extent in stomach, lamina propria of both duodenum and colon, ovary, thymus, pancreas, adrenal gland and testis (spermatogonia, early spermatocytes and Sertoli cells). Weak expression in heart and lung. The other peptides are expressed at least in Sertoli cells, nei being also expressed in brain, stomach and proximal duodenum. In brain exclusively mature mch and nei peptides are present. In peripheral tissues a large product, encompassing the NEI and MCH domains of the precursor, is found predominantly. At low levels fully processed MCH and NEI peptides are present in gut. No expression in peripheral blood.

It is found in the secreted. In terms of biological role, MCH inhibits ACTH secretion at the end of the light on period which corresponds to the peak of the circadian rhythm in ACTH. Inhibits also stress induced ACTH release during the light off period of the cycle. Involved as a neurotransmitter or neuromodulator in a broad array of neuronal functions. Stimulates sexual behavior when injected into the ventromedial nucleus, this effect is antagonized by NEI. In the medial preoptic area, stimulates anxiety and sexual behavior. Antagonizes inhibitory effect of melanotropin alpha on exploration behavior. Its function is as follows. NEI can influence differentiation of neuronal processes in brain neurons. Affects the content of neurofilament protein in neuritogenesis (in vitro). May also be a neuromodulatory factor. In behavioral tests, it stimulates exploration and anxiety when injected into the ventromedial nucleus. Also stimulates grooming, locomotion and rearing. May antagonize the inhibitory effect of mch on ACTH release. Reduces dopamine and dopac release in the ventromedial nucleus. This Rattus norvegicus (Rat) protein is Pro-MCH (Pmch).